The sequence spans 227 residues: 2,3-bisphosphoglycerate-dependent phosphoglycerate mutase (227 aa).

Substrate contacts are provided by residues Arg7–Asn14, Thr20–Gly21, Arg59, Glu86–Tyr89, Lys97, Arg113–Arg114, and Gly182–Asn183. The Tele-phosphohistidine intermediate role is filled by His8. Glu86 acts as the Proton donor/acceptor in catalysis.

This sequence belongs to the phosphoglycerate mutase family. BPG-dependent PGAM subfamily. Homodimer.

It carries out the reaction (2R)-2-phosphoglycerate = (2R)-3-phosphoglycerate. The protein operates within carbohydrate degradation; glycolysis; pyruvate from D-glyceraldehyde 3-phosphate: step 3/5. Functionally, catalyzes the interconversion of 2-phosphoglycerate and 3-phosphoglycerate. This is 2,3-bisphosphoglycerate-dependent phosphoglycerate mutase from Neisseria meningitidis serogroup B (strain ATCC BAA-335 / MC58).